A 429-amino-acid polypeptide reads, in one-letter code: Ribosomal RNA small subunit methyltransferase B (429 aa).

S-adenosyl-L-methionine-binding positions include 254–260 (CAAPGGK), aspartate 277, aspartate 303, and aspartate 322. The active-site Nucleophile is the cysteine 375. A disordered region spans residues 397 to 419 (ALSETGTPDQPGQQNLPGGEEGD). A compositionally biased stretch (polar residues) spans 400–412 (ETGTPDQPGQQNL).

It belongs to the class I-like SAM-binding methyltransferase superfamily. RsmB/NOP family.

It localises to the cytoplasm. The catalysed reaction is cytidine(967) in 16S rRNA + S-adenosyl-L-methionine = 5-methylcytidine(967) in 16S rRNA + S-adenosyl-L-homocysteine + H(+). Functionally, specifically methylates the cytosine at position 967 (m5C967) of 16S rRNA. The protein is Ribosomal RNA small subunit methyltransferase B of Salmonella paratyphi A (strain ATCC 9150 / SARB42).